The chain runs to 91 residues: Probable Fe(2+)-trafficking protein (91 aa).

The protein belongs to the Fe(2+)-trafficking protein family. As to quaternary structure, monomer.

In terms of biological role, could be a mediator in iron transactions between iron acquisition and iron-requiring processes, such as synthesis and/or repair of Fe-S clusters in biosynthetic enzymes. The polypeptide is Probable Fe(2+)-trafficking protein (Klebsiella pneumoniae (strain 342)).